The chain runs to 369 residues: Probable dual-specificity RNA methyltransferase RlmN (369 aa).

Glu-98 (proton acceptor) is an active-site residue. The region spanning 106–341 is the Radical SAM core domain; that stretch reads STSRNTLCIS…VTVRKSRGAD (236 aa). Cysteines 113 and 346 form a disulfide. [4Fe-4S] cluster-binding residues include Cys-120, Cys-124, and Cys-127. Residues 171-172, Ser-204, 227-229, and Asn-303 contribute to the S-adenosyl-L-methionine site; these read GE and SLH. The active-site S-methylcysteine intermediate is Cys-346.

Belongs to the radical SAM superfamily. RlmN family. It depends on [4Fe-4S] cluster as a cofactor.

The protein localises to the cytoplasm. It catalyses the reaction adenosine(2503) in 23S rRNA + 2 reduced [2Fe-2S]-[ferredoxin] + 2 S-adenosyl-L-methionine = 2-methyladenosine(2503) in 23S rRNA + 5'-deoxyadenosine + L-methionine + 2 oxidized [2Fe-2S]-[ferredoxin] + S-adenosyl-L-homocysteine. The enzyme catalyses adenosine(37) in tRNA + 2 reduced [2Fe-2S]-[ferredoxin] + 2 S-adenosyl-L-methionine = 2-methyladenosine(37) in tRNA + 5'-deoxyadenosine + L-methionine + 2 oxidized [2Fe-2S]-[ferredoxin] + S-adenosyl-L-homocysteine. Its function is as follows. Specifically methylates position 2 of adenine 2503 in 23S rRNA and position 2 of adenine 37 in tRNAs. This Chloroherpeton thalassium (strain ATCC 35110 / GB-78) protein is Probable dual-specificity RNA methyltransferase RlmN.